Here is a 219-residue protein sequence, read N- to C-terminus: Apoptosis regulator OPG045 (219 aa).

Belongs to the orthopoxvirus OPG045 family. As to quaternary structure, homodimer. Interacts with host pro-apoptotic protein BCL2L11 (via BH3 domain). Interacts with host NLRP1. Interacts with host BAK.

It localises to the host mitochondrion outer membrane. The protein localises to the host cytoplasm. Plays a role in evading host innate immune response by inhibiting host inflammasome activation. Interacts with and inhibits NLR-mediated interleukin-1 beta/IL1B production in infected cells. At the host mitochondria outer membrane, interacts with the BH3 domain of host BAK and prevents BAK from binding active BAX. In turn, host apoptosis is inhibited. The protein is Apoptosis regulator OPG045 (OPG045) of Cynomys gunnisoni (Gunnison's prairie dog).